The following is a 278-amino-acid chain: Lectin 6 (278 aa).

A signal peptide spans 1-23 (MTLSSALIKIFITFLFLQNHVNS). N116, N139, and N271 each carry an N-linked (GlcNAc...) asparagine glycan.

It belongs to the leguminous lectin family.

May be involved in arbuscular mycorrhizal (AM) symbiosis with AM fungi. The sequence is that of Lectin 6 from Medicago truncatula (Barrel medic).